We begin with the raw amino-acid sequence, 246 residues long: UDP-N-acetyl-D-mannosaminuronic acid transferase (246 aa).

Belongs to the glycosyltransferase 26 family.

The catalysed reaction is UDP-N-acetyl-alpha-D-mannosaminouronate + N-acetyl-alpha-D-glucosaminyl-di-trans,octa-cis-undecaprenyl diphosphate = beta-D-ManNAcA-(1-&gt;4)-alpha-D-GlcNAc-di-trans,octa-cis-undecaprenyl diphosphate + UDP + H(+). It functions in the pathway bacterial outer membrane biogenesis; enterobacterial common antigen biosynthesis. Its function is as follows. Catalyzes the synthesis of Und-PP-GlcNAc-ManNAcA (Lipid II), the second lipid-linked intermediate involved in enterobacterial common antigen (ECA) synthesis. This is UDP-N-acetyl-D-mannosaminuronic acid transferase from Salmonella schwarzengrund (strain CVM19633).